Reading from the N-terminus, the 733-residue chain is Phosphoribosylformylglycinamidine synthase subunit PurL (733 aa).

His-44 is a catalytic residue. Positions 47 and 86 each coordinate ATP. Glu-88 is a Mg(2+) binding site. Substrate-binding positions include 89 to 92 (SHNH) and Arg-111. His-90 serves as the catalytic Proton acceptor. Position 112 (Asp-112) interacts with Mg(2+). Gln-240 contacts substrate. A Mg(2+)-binding site is contributed by Asp-268. Substrate is bound at residue 312–314 (ESQ). Residues Asp-496 and Gly-533 each contribute to the ATP site. Mg(2+) is bound at residue Asn-534. Ser-536 contributes to the substrate binding site.

Belongs to the FGAMS family. As to quaternary structure, monomer. Part of the FGAM synthase complex composed of 1 PurL, 1 PurQ and 2 PurS subunits.

It is found in the cytoplasm. The enzyme catalyses N(2)-formyl-N(1)-(5-phospho-beta-D-ribosyl)glycinamide + L-glutamine + ATP + H2O = 2-formamido-N(1)-(5-O-phospho-beta-D-ribosyl)acetamidine + L-glutamate + ADP + phosphate + H(+). It functions in the pathway purine metabolism; IMP biosynthesis via de novo pathway; 5-amino-1-(5-phospho-D-ribosyl)imidazole from N(2)-formyl-N(1)-(5-phospho-D-ribosyl)glycinamide: step 1/2. Part of the phosphoribosylformylglycinamidine synthase complex involved in the purines biosynthetic pathway. Catalyzes the ATP-dependent conversion of formylglycinamide ribonucleotide (FGAR) and glutamine to yield formylglycinamidine ribonucleotide (FGAM) and glutamate. The FGAM synthase complex is composed of three subunits. PurQ produces an ammonia molecule by converting glutamine to glutamate. PurL transfers the ammonia molecule to FGAR to form FGAM in an ATP-dependent manner. PurS interacts with PurQ and PurL and is thought to assist in the transfer of the ammonia molecule from PurQ to PurL. The chain is Phosphoribosylformylglycinamidine synthase subunit PurL from Wolinella succinogenes (strain ATCC 29543 / DSM 1740 / CCUG 13145 / JCM 31913 / LMG 7466 / NCTC 11488 / FDC 602W) (Vibrio succinogenes).